The sequence spans 905 residues: Probable coatomer subunit gamma (905 aa).

HEAT repeat units lie at residues threonine 265 to aspartate 302, aspartate 303 to histidine 340, aspartate 374 to arginine 412, glutamine 414 to glutamate 450, and lysine 525 to phenylalanine 563. Serine 604 is modified (phosphoserine).

Belongs to the COPG family. As to quaternary structure, oligomeric complex that consists of at least the alpha, beta, beta', gamma, delta, epsilon and zeta subunits.

It localises to the cytoplasm. The protein resides in the golgi apparatus membrane. The protein localises to the cytoplasmic vesicle. It is found in the COPI-coated vesicle membrane. In terms of biological role, the coatomer is a cytosolic protein complex that binds to dilysine motifs and reversibly associates with Golgi non-clathrin-coated vesicles, which further mediate biosynthetic protein transport from the ER, via the Golgi up to the trans Golgi network. Coatomer complex is required for budding from Golgi membranes, and is essential for the retrograde Golgi-to-ER transport of dilysine-tagged proteins. The protein is Probable coatomer subunit gamma (sec21) of Schizosaccharomyces pombe (strain 972 / ATCC 24843) (Fission yeast).